The primary structure comprises 221 residues: Deoxyribose-phosphate aldolase (221 aa).

The active-site Proton donor/acceptor is the Asp91. Lys153 acts as the Schiff-base intermediate with acetaldehyde in catalysis. Lys182 functions as the Proton donor/acceptor in the catalytic mechanism.

Belongs to the DeoC/FbaB aldolase family. DeoC type 1 subfamily.

It localises to the cytoplasm. The catalysed reaction is 2-deoxy-D-ribose 5-phosphate = D-glyceraldehyde 3-phosphate + acetaldehyde. The protein operates within carbohydrate degradation; 2-deoxy-D-ribose 1-phosphate degradation; D-glyceraldehyde 3-phosphate and acetaldehyde from 2-deoxy-alpha-D-ribose 1-phosphate: step 2/2. In terms of biological role, catalyzes a reversible aldol reaction between acetaldehyde and D-glyceraldehyde 3-phosphate to generate 2-deoxy-D-ribose 5-phosphate. The sequence is that of Deoxyribose-phosphate aldolase from Clostridium botulinum (strain Eklund 17B / Type B).